A 193-amino-acid chain; its full sequence is Copper-binding lipoprotein NosL (193 aa).

The N-terminal stretch at 1–19 (MRTRLRFVLVAAALALLSA) is a signal peptide. A lipid anchor (N-palmitoyl cysteine) is attached at Cys20. The S-diacylglycerol cysteine moiety is linked to residue Cys20.

The protein belongs to the NosL family. In terms of assembly, monomer. Apo-NosL can form homodimers.

It localises to the cell membrane. Its function is as follows. May act as a metallochaperone involved in nitrous oxide reductase assembly. Specifically binds Cu(+). In Achromobacter cycloclastes, this protein is Copper-binding lipoprotein NosL.